A 279-amino-acid polypeptide reads, in one-letter code: Calcium-activated potassium channel subunit beta-3 (279 aa).

The Cytoplasmic portion of the chain corresponds to 1 to 60; the sequence is MDFSPSSELGFHFVAFILLTRHRTAFPASGKKRETDYSDGDPLDVHKRLPSSAGEDRAVM. Residues 61-81 form a helical membrane-spanning segment; the sequence is LGFAMMGFSVLMFFLLGTTIL. Residues 82–207 are Extracellular-facing; the sequence is KPFMLSIQRE…DVILIKKYDQ (126 aa). The N-linked (GlcNAc...) asparagine glycan is linked to Asn131. A helical transmembrane segment spans residues 208–228; sequence MAIFHCLFWPSLTLLGGALIV. Residues 229–279 are Cytoplasmic-facing; sequence GMVRLTQHLSLLCEKYSTVVRDEVGGKVPYIEQHQFKLCIMRRSKGRAEKS.

Belongs to the KCNMB (TC 8.A.14.1) family. KCNMB3 subfamily. As to quaternary structure, interacts with KCNMA1 tetramer. There are probably 4 molecules of KCMNB3 per KCNMA1 tetramer. In terms of processing, N-glycosylated. Post-translationally, the extracellular domain contains disulfide bond essential for the gating mechanism. Isoform 1, isoform 3 and isoform 4 are widely expressed. Isoform 2 is expressed placenta, pancreas, kidney and heart. Isoform 1 and isoform 3 are highly expressed in pancreas and testis.

The protein localises to the membrane. Regulatory subunit of the calcium activated potassium KCNMA1 (maxiK) channel. Modulates the calcium sensitivity and gating kinetics of KCNMA1, thereby contributing to KCNMA1 channel diversity. Alters the functional properties of the current expressed by the KCNMA1 channel. Isoform 2, isoform 3 and isoform 4 partially inactivate the current of KCNBMA. Isoform 4 induces a fast and incomplete inactivation of KCNMA1 channel that is detectable only at large depolarizations. In contrast, isoform 1 does not induce detectable inactivation of KCNMA1. Two or more subunits of KCNMB3 are required to block the KCNMA1 tetramer. In Homo sapiens (Human), this protein is Calcium-activated potassium channel subunit beta-3 (KCNMB3).